The chain runs to 423 residues: Aspartic protease-like protein pytH (423 aa).

The signal sequence occupies residues 1-16 (MWLSVALLTLLDGALA). Positions 38–416 (TTDAIQIGTP…DFDKLRVGLA (379 aa)) constitute a Peptidase A1 domain. Residue Asp-56 is part of the active site. Asn-88, Asn-97, Asn-168, Asn-196, Asn-231, and Asn-279 each carry an N-linked (GlcNAc...) asparagine glycan. Asp-291 is an active-site residue. N-linked (GlcNAc...) asparagine glycosylation occurs at Asn-330. An intrachain disulfide couples Cys-338 to Cys-377.

The protein belongs to the peptidase A1 family.

It functions in the pathway secondary metabolite biosynthesis. Functionally, aspartic protease-like protein; part of the gene cluster that mediates the biosynthesis of pyranterreones, a family of antioxidative compounds. The first step of pyranonigrins biosynthesis is performed by the hybrid PKS-NRPS synthetase pytA that condenses 4 malonyl-CoA units ato the acetyl starter unit by the modular PKS of pytA. The acyl chain is then connected to an L-serine through the amide bond by the modular NRPS of pytA. A tetramic acid is formed and released from the PKS-NRPS pytA to give pyranterreone 5 with the help of the thioesterase pytI. Pyranterreone 5 could be methylated by pytC to afford pyranterreone 6. Both pyranterreones 5 and 6 are subsequently oxidized by the FAD-linked oxidoreductase pytB and the cytochrome P450 monooxygenase pytD to form the fused gamma-pyrone core, resulting in pyranterreones 7 and 11, respectively. The hydroxy group at C-8 of pyranterreones 7 and 11 are dehydrated by the aspartyl protease pytH to form a delta-7 double bond to give pyranterreones 3 and 1, 2 accordingly. The exo-methylene of pyranterreone 3 could be reduced into a pendant methyl by reductase pytE to provide pyranterreone 4, also known as cordylactam. Pyranterreone 4 can be reconverted to pyranterreone 3 through pytB-catalyzed dehydrogenation or further oxidized to pyranterreones 9 and 10. This chain is Aspartic protease-like protein pytH, found in Aspergillus terreus (strain NIH 2624 / FGSC A1156).